A 211-amino-acid polypeptide reads, in one-letter code: MAQSKSNPPQVPSGWKAVFDDEYQTWYYVDLSTNSSQWEPPRGTTWPRPKGPPPGVNNEKSSRQQADQAPPPYSSQSTPQVQAGAQAQQPRYYQPQQPQYPQYPQQQRYYPQQAPMPAAAPQQAYYGTAPSTSKGSGHGGAMMGGLLGVGAGLLGGAMLEHAFDDHNYDGPDTVVVENNYYGDDAGGSDGGFDDAGGFDGGFDDGFDGSDF.

In terms of domain architecture, WW spans 9-43; that stretch reads PQVPSGWKAVFDDEYQTWYYVDLSTNSSQWEPPRG. The interval 32–116 is disordered; that stretch reads STNSSQWEPP…QRYYPQQAPM (85 aa). Residues K50 and K60 each participate in a glycyl lysine isopeptide (Lys-Gly) (interchain with G-Cter in ubiquitin) cross-link. At S75 the chain carries Phosphoserine. T78 is subject to Phosphothreonine. Residues 80 to 116 are compositionally biased toward low complexity; that stretch reads QVQAGAQAQQPRYYQPQQPQYPQYPQQQRYYPQQAPM.

Interacts with metacaspase MCA1.

The protein localises to the cytoplasm. It localises to the nucleus. It is found in the mitochondrion. Functionally, involved in apoptosis. May play a role in nuclear function controlling cellular proliferation coupled to mitochondrial biogenesis. Causes impaired growth when overexpressed. The sequence is that of WW domain-containing protein WWM1 (WWM1) from Saccharomyces cerevisiae (strain ATCC 204508 / S288c) (Baker's yeast).